A 592-amino-acid polypeptide reads, in one-letter code: Aspartate--tRNA ligase (592 aa).

An L-aspartate-binding site is contributed by E180. The segment at 204 to 207 (QLFK) is aspartate. Residue R226 participates in L-aspartate binding. Residues 226–228 (RDE) and Q235 each bind ATP. Position 455 (H455) interacts with L-aspartate. E489 contacts ATP. R496 serves as a coordination point for L-aspartate. 541 to 544 (GFDR) is a binding site for ATP.

This sequence belongs to the class-II aminoacyl-tRNA synthetase family. Type 1 subfamily. As to quaternary structure, homodimer.

The protein resides in the cytoplasm. The enzyme catalyses tRNA(Asp) + L-aspartate + ATP = L-aspartyl-tRNA(Asp) + AMP + diphosphate. Functionally, catalyzes the attachment of L-aspartate to tRNA(Asp) in a two-step reaction: L-aspartate is first activated by ATP to form Asp-AMP and then transferred to the acceptor end of tRNA(Asp). This Clostridium tetani (strain Massachusetts / E88) protein is Aspartate--tRNA ligase.